The primary structure comprises 404 residues: Coenzyme F420H(2) oxidase (404 aa).

Positions 83, 85, 87, 88, 151, 170, and 233 each coordinate Fe cation. In terms of domain architecture, Flavodoxin-like spans 259–399 (VTVIYDTMHG…ACFEAGRKLA (141 aa)). Residues 265–270 (TMHGST), 317–320 (TIYD), and 351–356 (SMGGNG) each bind FMN.

The protein in the N-terminal section; belongs to the zinc metallo-hydrolase group 3 family. In terms of assembly, homodimer. Homotetramer. The tetramer is composed of two functional dimers. The cofactor is FMN. Requires Fe cation as cofactor.

The enzyme catalyses 2 reduced coenzyme F420-(gamma-L-Glu)(n) + O2 = 2 oxidized coenzyme F420-(gamma-L-Glu)(n) + 2 H2O + 2 H(+). Its function is as follows. Catalyzes the oxidation of F420H(2) with O(2). May be involved in O(2) detoxification, reducing the intracellular O(2) concentration to a level allowing growth at the expense of methane formation. This chain is Coenzyme F420H(2) oxidase, found in Methanothermobacter marburgensis (strain ATCC BAA-927 / DSM 2133 / JCM 14651 / NBRC 100331 / OCM 82 / Marburg) (Methanobacterium thermoautotrophicum).